The chain runs to 243 residues: Ribonuclease 3 (243 aa).

An RNase III domain is found at 10–146 (VNRFRKRFDT…FIGALYLDQG (137 aa)). Position 59 (Glu59) interacts with Mg(2+). The active site involves Asp63. The Mg(2+) site is built by Asp132 and Glu135. Glu135 is a catalytic residue. One can recognise a DRBM domain in the interval 172–241 (DFKTQFQEYV…AKSAYKQLKQ (70 aa)). Over residues 219-231 (GKGKTKKESEQRA) the composition is skewed to basic and acidic residues. The segment at 219-243 (GKGKTKKESEQRAAKSAYKQLKQIK) is disordered.

It belongs to the ribonuclease III family. Homodimer. The cofactor is Mg(2+).

It is found in the cytoplasm. The enzyme catalyses Endonucleolytic cleavage to 5'-phosphomonoester.. In terms of biological role, digests double-stranded RNA. Involved in the processing of primary rRNA transcript to yield the immediate precursors to the large and small rRNAs (23S and 16S). Processes some mRNAs, and tRNAs when they are encoded in the rRNA operon. Processes pre-crRNA and tracrRNA of type II CRISPR loci if present in the organism. This Staphylococcus aureus (strain Mu3 / ATCC 700698) protein is Ribonuclease 3.